The chain runs to 800 residues: Endonuclease MutS2 (800 aa).

336 to 343 (GPNTGGKT) contacts ATP. In terms of domain architecture, Smr spans 725–800 (LDLRGVRYEA…GDGATIVELK (76 aa)).

It belongs to the DNA mismatch repair MutS family. MutS2 subfamily. Homodimer. Binds to stalled ribosomes, contacting rRNA.

Functionally, endonuclease that is involved in the suppression of homologous recombination and thus may have a key role in the control of bacterial genetic diversity. Its function is as follows. Acts as a ribosome collision sensor, splitting the ribosome into its 2 subunits. Detects stalled/collided 70S ribosomes which it binds and splits by an ATP-hydrolysis driven conformational change. Acts upstream of the ribosome quality control system (RQC), a ribosome-associated complex that mediates the extraction of incompletely synthesized nascent chains from stalled ribosomes and their subsequent degradation. Probably generates substrates for RQC. This is Endonuclease MutS2 from Leuconostoc mesenteroides subsp. mesenteroides (strain ATCC 8293 / DSM 20343 / BCRC 11652 / CCM 1803 / JCM 6124 / NCDO 523 / NBRC 100496 / NCIMB 8023 / NCTC 12954 / NRRL B-1118 / 37Y).